Reading from the N-terminus, the 147-residue chain is Small ribosomal subunit protein uS13 (147 aa).

The interval 115–147 (SYKGRRHEAGLPVRGQRTKSTFRNSSSVGVKRS) is disordered. A compositionally biased stretch (polar residues) spans 132–147 (TKSTFRNSSSVGVKRS).

It belongs to the universal ribosomal protein uS13 family. In terms of assembly, part of the 30S ribosomal subunit. Forms a loose heterodimer with protein S19. Forms two bridges to the 50S subunit in the 70S ribosome.

Located at the top of the head of the 30S subunit, it contacts several helices of the 16S rRNA. In the 70S ribosome it contacts the 23S rRNA (bridge B1a) and protein L5 of the 50S subunit (bridge B1b), connecting the 2 subunits; these bridges are implicated in subunit movement. This chain is Small ribosomal subunit protein uS13, found in Methanobrevibacter smithii (strain ATCC 35061 / DSM 861 / OCM 144 / PS).